The following is a 1373-amino-acid chain: DNA-directed RNA polymerase subunit beta (1373 aa).

This sequence belongs to the RNA polymerase beta chain family. The RNAP catalytic core consists of 2 alpha, 1 beta, 1 beta' and 1 omega subunit. When a sigma factor is associated with the core the holoenzyme is formed, which can initiate transcription.

The enzyme catalyses RNA(n) + a ribonucleoside 5'-triphosphate = RNA(n+1) + diphosphate. Its function is as follows. DNA-dependent RNA polymerase catalyzes the transcription of DNA into RNA using the four ribonucleoside triphosphates as substrates. The chain is DNA-directed RNA polymerase subunit beta from Rickettsia peacockii (strain Rustic).